Here is a 591-residue protein sequence, read N- to C-terminus: MKKISLPKIGIRPVIDGRRMGVRESLEEQTMNMAKATAALITEKIRHACGAQVECVIADTCIAGMAESAACEEKFSSQNVGVTITVTPCWCYGSETIDMDPMRPKAIWGFNGTERPGAVYLAAALAAHSQKGIPAFSIYGHDVQDADDTSIPADVEEKLLRFARAGLAVASMKGKSYLSVGGVSMGIAGSIVDHNFFESWLGMKVQAVDMTELRRRIDQKIYDEAELEMALAWADKNFRYGEDQNASQYKRNEAQNRAVLKESLLMAMCIRDMMQGNKTLADKGLVEESLGYNAIAAGFQGQRHWTDQYPNGDTAEALLNSSFDWNGVREPFVVATENDSLNGVAMLFGHQLTGTAQIFADVRTYWSPEAVERVTGQALSGLAEHGIIHLINSGSAALDGACKQRDSEGKPTMKPHWEISQQEADACLAATEWCPAIHEYFRGGGYSSRFLTEGGVPFTMTRVNIIKGLGPVLQIAEGWSVELPKAMHDQLDARTNSTWPTTWFAPRLTGKGPFTDVYSVMANWGANHGVLTIGHVGADFITLAAMLRIPVCMHNVEEAKIYRPSAWAAHGMDIEGQDYRACQNYGPLYKR.

Catalysis depends on proton acceptor residues E337 and D361. Mn(2+)-binding residues include E337, D361, and H528.

Belongs to the L-fucose isomerase family. Homohexamer. The cofactor is Mn(2+).

The protein localises to the cytoplasm. It carries out the reaction L-fucose = L-fuculose. Its pathway is carbohydrate degradation; L-fucose degradation; L-lactaldehyde and glycerone phosphate from L-fucose: step 1/3. Converts the aldose L-fucose into the corresponding ketose L-fuculose. The protein is L-fucose isomerase of Salmonella paratyphi A (strain ATCC 9150 / SARB42).